Consider the following 267-residue polypeptide: 26S proteasome non-ATPase regulatory subunit 8 homolog A (267 aa).

At Met1 the chain carries N-acetylmethionine. The 173-residue stretch at 79-251 (DAFERDFFQL…APCKEIPSLQ (173 aa)) folds into the PCI domain.

The protein belongs to the proteasome subunit S14 family. Component of the 19S regulatory particle (RP/PA700) lid subcomplex of the 26S proteasome. The 26S proteasome is composed of a core protease (CP), known as the 20S proteasome, capped at one or both ends by the 19S regulatory particle (RP/PA700). The RP/PA700 complex is composed of at least 17 different subunits in two subcomplexes, the base and the lid, which form the portions proximal and distal to the 20S proteolytic core, respectively. Interacts with PUB22 and PUB23. Binds to the translation initiation factors TIF3E1. Interacts with UCH1 and UCH2. Ubiquitinated by PUB22 and PUB23. Ubiquitous with highest expression in flowers.

Its function is as follows. Acts as a regulatory subunit of the 26S proteasome which is involved in the ATP-dependent degradation of ubiquitinated proteins. May help to control the degradation of one or more factors that repress cytokinin signaling. Plays an important role for balancing cell expansion with cell proliferation rates during shoot development. This Arabidopsis thaliana (Mouse-ear cress) protein is 26S proteasome non-ATPase regulatory subunit 8 homolog A.